The sequence spans 1209 residues: 3',5'-cyclic-AMP phosphodiesterase, isoform I (1209 aa).

Disordered stretches follow at residues 16–35 (NVAK…GSGT), 59–82 (GGGS…KRKS), 275–353 (LYSG…PLPP), 372–403 (SATS…SPRI), 442–498 (ETLA…MQAE), 626–655 (VPAS…LSQG), and 754–792 (SAGQ…RLPT). Composition is skewed to gly residues over residues 25 to 35 (SSNGTGNGSGT) and 59 to 77 (GGGS…GSGS). Polar residues predominate over residues 275–290 (LYSGSNPSTNPCQSAV). The segment covering 291–314 (QNQGQNSNPNPNQNPNTNPNQNQQ) has biased composition (low complexity). Residues 315–324 (RCSCQPQTSP) show a composition bias toward polar residues. A compositionally biased stretch (low complexity) spans 372-383 (SATSSSAGTVPP). Positions 385–400 (GQQTQEYIAGTSSTPS) are enriched in polar residues. 2 stretches are compositionally biased toward low complexity: residues 445–462 (ASSS…NSSS) and 472–483 (TSSSASALATSH). Composition is skewed to polar residues over residues 484–498 (PSNS…MQAE) and 627–645 (PASN…SRSG). In terms of domain architecture, PDEase spans 795-1124 (VETPRENELG…DYYQSMIPPS (330 aa)). H871 (proton donor) is an active-site residue. 3',5'-cyclic AMP is bound at residue 871 to 875 (HNSLH). The a divalent metal cation site is built by H875, H911, D912, and D1029. D912, D1029, and Q1080 together coordinate 3',5'-cyclic AMP. A compositionally biased stretch (acidic residues) spans 1146–1163 (EESDQENLAELEEGDESG). The disordered stretch occupies residues 1146–1209 (EESDQENLAE…CQNQPQHGGM (64 aa)). Residues 1164 to 1181 (GESTTTGTTGTTAASALS) show a composition bias toward low complexity. The segment covering 1182 to 1193 (GAGGGGGGGGGM) has biased composition (gly residues). Residues 1199–1209 (GCQNQPQHGGM) show a composition bias toward polar residues.

The protein belongs to the cyclic nucleotide phosphodiesterase family. PDE4 subfamily. Monomer. It depends on a divalent metal cation as a cofactor.

The enzyme catalyses 3',5'-cyclic AMP + H2O = AMP + H(+). It participates in purine metabolism; 3',5'-cyclic AMP degradation; AMP from 3',5'-cyclic AMP: step 1/1. Hydrolyzes the second messenger cAMP, which is a key regulator of many important physiological processes. Vital for female fertility. Required for learning/memory. This chain is 3',5'-cyclic-AMP phosphodiesterase, isoform I, found in Drosophila melanogaster (Fruit fly).